A 306-amino-acid polypeptide reads, in one-letter code: Putative B3 domain-containing protein Os03g0621600 (306 aa).

A DNA-binding region (TF-B3 1) is located at residues 29 to 122; it reads FSVLCLMPIM…QLKTLIFDSS (94 aa). The interval 139–166 is disordered; sequence YDIAMRNSQDEKKKRKQRDISRQGTVKP. The TF-B3 2 DNA-binding region spans 210–306; the sequence is GYVMNNSSIH…VMDVHIIRRK (97 aa).

The protein localises to the nucleus. The chain is Putative B3 domain-containing protein Os03g0621600 from Oryza sativa subsp. japonica (Rice).